Here is a 512-residue protein sequence, read N- to C-terminus: Probable malate:quinone oxidoreductase (512 aa).

Belongs to the MQO family. FAD is required as a cofactor.

It carries out the reaction (S)-malate + a quinone = a quinol + oxaloacetate. It participates in carbohydrate metabolism; tricarboxylic acid cycle; oxaloacetate from (S)-malate (quinone route): step 1/1. This chain is Probable malate:quinone oxidoreductase, found in Bradyrhizobium diazoefficiens (strain JCM 10833 / BCRC 13528 / IAM 13628 / NBRC 14792 / USDA 110).